Consider the following 58-residue polypeptide: ATP synthase F(0) complex subunit k, mitochondrial (58 aa).

Residues K16 and K17 each carry the N6-acetyllysine modification. A helical membrane pass occupies residues 23–45 (TLTGRMNCVLATYGSIALIVLYF).

In terms of assembly, component of the ATP synthase complex composed at least of ATP5F1A/subunit alpha, ATP5F1B/subunit beta, ATP5MC1/subunit c (homooctomer), MT-ATP6/subunit a, MT-ATP8/subunit 8, ATP5ME/subunit e, ATP5MF/subunit f, ATP5MG/subunit g, ATP5MK/subunit k, ATP5MJ/subunit j, ATP5F1C/subunit gamma, ATP5F1D/subunit delta, ATP5F1E/subunit epsilon, ATP5PF/subunit F6, ATP5PB/subunit b, ATP5PD/subunit d, ATP5PO/subunit OSCP. ATP synthase complex consists of a soluble F(1) head domain (subunits alpha(3) and beta(3)) - the catalytic core - and a membrane F(0) domain - the membrane proton channel (subunits c, a, 8, e, f, g, k and j). These two domains are linked by a central stalk (subunits gamma, delta, and epsilon) rotating inside the F1 region and a stationary peripheral stalk (subunits F6, b, d, and OSCP). The ATP synthase complex/complex V exists as a monomeric and a dimeric supercomplex that helps shape mitochondrial cristae to optimize proton flow.

It localises to the mitochondrion membrane. Functionally, subunit k, of the mitochondrial membrane ATP synthase complex (F(1)F(0) ATP synthase or Complex V) that produces ATP from ADP in the presence of a proton gradient across the membrane which is generated by electron transport complexes of the respiratory chain. ATP synthase complex consist of a soluble F(1) head domain - the catalytic core - and a membrane F(1) domain - the membrane proton channel. These two domains are linked by a central stalk rotating inside the F(1) region and a stationary peripheral stalk. During catalysis, ATP synthesis in the catalytic domain of F(1) is coupled via a rotary mechanism of the central stalk subunits to proton translocation. In vivo, can only synthesize ATP although its ATP hydrolase activity can be activated artificially in vitro. Part of the complex F(0) domain. Required for dimerization of the ATP synthase complex and as such regulates ATP synthesis in the mitochondria. This is ATP synthase F(0) complex subunit k, mitochondrial from Homo sapiens (Human).